Reading from the N-terminus, the 243-residue chain is Carboxy-S-adenosyl-L-methionine synthase (243 aa).

S-adenosyl-L-methionine is bound by residues Tyr35, Gly68 to Ser70, Asp92 to Asn93, and Arg199.

Belongs to the class I-like SAM-binding methyltransferase superfamily. Cx-SAM synthase family. As to quaternary structure, homodimer.

The catalysed reaction is prephenate + S-adenosyl-L-methionine = carboxy-S-adenosyl-L-methionine + 3-phenylpyruvate + H2O. Catalyzes the conversion of S-adenosyl-L-methionine (SAM) to carboxy-S-adenosyl-L-methionine (Cx-SAM). This Helicobacter pylori (strain ATCC 700392 / 26695) (Campylobacter pylori) protein is Carboxy-S-adenosyl-L-methionine synthase.